A 100-amino-acid polypeptide reads, in one-letter code: MRFGASLNCGASGWVKSTKSPLTSLWTNCAWAKHNPPFALQNRHCLTPGEKALSGRASRPLRSARVAIFMAFCAPDLACSPKSFKSSTDTAHSDRWLSLG.

The disordered stretch occupies residues Pro81–Gly100. Over residues Ala91–Gly100 the composition is skewed to basic and acidic residues.

This is Putative protein p52 (52) from Escherichia coli (Bacteriophage APSE-1).